The chain runs to 211 residues: Leucyl/phenylalanyl-tRNA--protein transferase (211 aa).

The protein belongs to the L/F-transferase family.

Its subcellular location is the cytoplasm. It carries out the reaction N-terminal L-lysyl-[protein] + L-leucyl-tRNA(Leu) = N-terminal L-leucyl-L-lysyl-[protein] + tRNA(Leu) + H(+). The catalysed reaction is N-terminal L-arginyl-[protein] + L-leucyl-tRNA(Leu) = N-terminal L-leucyl-L-arginyl-[protein] + tRNA(Leu) + H(+). The enzyme catalyses L-phenylalanyl-tRNA(Phe) + an N-terminal L-alpha-aminoacyl-[protein] = an N-terminal L-phenylalanyl-L-alpha-aminoacyl-[protein] + tRNA(Phe). Functionally, functions in the N-end rule pathway of protein degradation where it conjugates Leu, Phe and, less efficiently, Met from aminoacyl-tRNAs to the N-termini of proteins containing an N-terminal arginine or lysine. The polypeptide is Leucyl/phenylalanyl-tRNA--protein transferase (Flavobacterium psychrophilum (strain ATCC 49511 / DSM 21280 / CIP 103535 / JIP02/86)).